The primary structure comprises 255 residues: Alpha-acetolactate decarboxylase (255 aa).

It belongs to the alpha-acetolactate decarboxylase family.

It carries out the reaction (2S)-2-acetolactate + H(+) = (R)-acetoin + CO2. It functions in the pathway polyol metabolism; (R,R)-butane-2,3-diol biosynthesis; (R,R)-butane-2,3-diol from pyruvate: step 2/3. Functionally, converts acetolactate into acetoin, which can be excreted by the cells. This may be a mechanism for controlling the internal pH of cells in the stationary stage. The polypeptide is Alpha-acetolactate decarboxylase (alsD) (Bacillus subtilis (strain 168)).